We begin with the raw amino-acid sequence, 463 residues long: Phosphoglucosamine mutase (463 aa).

S110 serves as the catalytic Phosphoserine intermediate. Residues S110, D255, D257, and D259 each coordinate Mg(2+). Phosphoserine is present on S110.

This sequence belongs to the phosphohexose mutase family. The cofactor is Mg(2+). In terms of processing, activated by phosphorylation.

It catalyses the reaction alpha-D-glucosamine 1-phosphate = D-glucosamine 6-phosphate. Its function is as follows. Catalyzes the conversion of glucosamine-6-phosphate to glucosamine-1-phosphate. The protein is Phosphoglucosamine mutase of Koribacter versatilis (strain Ellin345).